Reading from the N-terminus, the 221-residue chain is Large ribosomal subunit protein bL25 (221 aa).

Residues 192 to 221 (APRVEKEETEEDTVAPGDVPAENSKDADEE) are disordered.

The protein belongs to the bacterial ribosomal protein bL25 family. CTC subfamily. In terms of assembly, part of the 50S ribosomal subunit; part of the 5S rRNA/L5/L18/L25 subcomplex. Contacts the 5S rRNA. Binds to the 5S rRNA independently of L5 and L18.

Its function is as follows. This is one of the proteins that binds to the 5S RNA in the ribosome where it forms part of the central protuberance. In Idiomarina loihiensis (strain ATCC BAA-735 / DSM 15497 / L2-TR), this protein is Large ribosomal subunit protein bL25.